A 468-amino-acid chain; its full sequence is MDASVDKILAGKYPAKHHAKRVAARIRELGHGEAGVIYLESQKTRMIEDNDGEMPFRQRRNFFYLSGCPLPDSYLTYNIEEDHLTLFIPPIDEDSVIWSGLPLSPDEALELYDVDAVLSTADVNASLAHYCSAKEGTKVFAISDQVSPHITFLPFQETDFDVLKRAAEEARVVKDDYEIALLRRANEISSKAHVAVIKAAKSAMNERELEATFIATCMSYGCREQSYHPIFAGGTNGATLHYQKNDQDLVDKTTGEKKLNMLVDAGGEYRNYCADITRVFPLSGKFSAESRQIYDIVLEMQMTSLAMIKAGVMWEDVHSNSHRVAIRGLLKLGILRGTEQELFDKGISVAFFPHGLGHYLGMDTHDTGGNPNYEDKDSKFKYLRLRGVLACGGVVTVEPGLYFCRFIIDPYLASPELGKYIDANVLEKYWSVGGVRLEDNVVVTQNGYDNLTTAPKIPEEIEKLAAGP.

Mn(2+) is bound by residues Asp264, Asp275, Glu398, and Glu438.

Belongs to the peptidase M24B family. Mn(2+) is required as a cofactor.

The catalysed reaction is Release of any N-terminal amino acid, including proline, that is linked to proline, even from a dipeptide or tripeptide.. Its function is as follows. Catalyzes the removal of a penultimate prolyl residue from the N-termini of peptides. In Ajellomyces dermatitidis (strain ER-3 / ATCC MYA-2586) (Blastomyces dermatitidis), this protein is Probable Xaa-Pro aminopeptidase PEPP (PEPP).